The following is a 796-amino-acid chain: Protein SEY1 homolog (796 aa).

Residues 1 to 701 (MESSNDFSNK…AGTSISSWRN (701 aa)) are Cytoplasmic-facing. The GB1/RHD3-type G domain maps to 46–280 (GFRFNVVTIL…VPSDGFFVYS (235 aa)). GTP is bound at residue 56 to 63 (GSQSSGKS). The stretch at 554–626 (SLVLLLKAAR…DALTLLKVLK (73 aa)) forms a coiled coil. A helical membrane pass occupies residues 702-722 (IPPIFWLVLLVLGWNELRSVF). Topologically, residues 723–725 (KVL) are lumenal. The chain crosses the membrane as a helical span at residues 726-746 (LRFYVVIPLLIVFYFTFSYSA). Topologically, residues 747-796 (TKLLGPKADQYVKPVRDKVLSLFTALLAWFVRTLHMIASKSSSFKQRPAT) are cytoplasmic.

This sequence belongs to the TRAFAC class dynamin-like GTPase superfamily. GB1/RHD3 GTPase family. RHD3 subfamily.

It is found in the endoplasmic reticulum membrane. Functionally, probable GTP-binding protein that may be involved in cell development. The chain is Protein SEY1 homolog from Theileria parva (East coast fever infection agent).